The following is an 85-amino-acid chain: Putative membrane protein insertion efficiency factor (85 aa).

The protein belongs to the UPF0161 family.

The protein localises to the cell membrane. In terms of biological role, could be involved in insertion of integral membrane proteins into the membrane. Functionally, lyses fish blood cells. The protein is Putative membrane protein insertion efficiency factor (hlyA) of Aeromonas hydrophila.